We begin with the raw amino-acid sequence, 319 residues long: Ribosomal RNA small subunit methyltransferase H (319 aa).

S-adenosyl-L-methionine-binding positions include 38–40, D58, F82, D104, and Q111; that span reads GGH.

Belongs to the methyltransferase superfamily. RsmH family.

It localises to the cytoplasm. The catalysed reaction is cytidine(1402) in 16S rRNA + S-adenosyl-L-methionine = N(4)-methylcytidine(1402) in 16S rRNA + S-adenosyl-L-homocysteine + H(+). Functionally, specifically methylates the N4 position of cytidine in position 1402 (C1402) of 16S rRNA. This Histophilus somni (strain 129Pt) (Haemophilus somnus) protein is Ribosomal RNA small subunit methyltransferase H.